Here is a 332-residue protein sequence, read N- to C-terminus: D-lactate dehydrogenase (332 aa).

NAD(+) contacts are provided by residues 155–156, aspartate 175, 206–207, asparagine 212, 233–235, and aspartate 259; these read RI, VP, and FAR. Residue arginine 235 is part of the active site. Glutamate 264 is a catalytic residue. Histidine 296 (proton donor) is an active-site residue.

This sequence belongs to the D-isomer specific 2-hydroxyacid dehydrogenase family.

It catalyses the reaction (R)-lactate + NAD(+) = pyruvate + NADH + H(+). The chain is D-lactate dehydrogenase (ldhD) from Lactiplantibacillus plantarum (strain ATCC BAA-793 / NCIMB 8826 / WCFS1) (Lactobacillus plantarum).